The primary structure comprises 961 residues: Rho guanine nucleotide exchange factor 2 (961 aa).

The Phorbol-ester/DAG-type zinc finger occupies glycine 12–cysteine 59. 10 positions are modified to phosphoserine: serine 82, serine 95, serine 102, serine 106, serine 110, serine 124, serine 136, serine 145, serine 147, and serine 150. The interval arginine 104–aspartate 134 is interaction with DYNLT1. Residues lysine 209–aspartate 406 enclose the DH domain. Lysine 327 carries the N6-acetyllysine modification. Residues lysine 446–arginine 545 enclose the PH domain. Positions glutamate 561–leucine 588 form a coiled coil. Residues serine 619 and serine 622 each carry the phosphoserine modification. Phosphothreonine; by MAPK1 or MAPK3 is present on threonine 653. The tract at residues leucine 659–alanine 679 is disordered. A phosphoserine mark is found at serine 665, serine 670, serine 685, and serine 756. Over residues proline 742–alanine 761 the composition is skewed to basic and acidic residues. Residues proline 742–alanine 770 form a disordered region. A coiled-coil region spans residues glutamate 772–glutamate 841. Position 860 is a phosphoserine; by PAK1 and AURKA (serine 860). Residues leucine 867–serine 961 form a disordered region. The residue at position 868 (tyrosine 868) is a Phosphotyrosine. Serine 870 bears the Phosphoserine; by PAK4 mark. Residues arginine 894–aspartate 913 are compositionally biased toward basic and acidic residues. Phosphoserine is present on residues serine 906, serine 914, and serine 915. Residues serine 915 to glycine 925 show a composition bias toward acidic residues. Threonine 919 carries the phosphothreonine modification. Phosphoserine occurs at positions 921, 927, 928, and 931. At serine 935 the chain carries Phosphoserine; by CDK1.

Found in a complex composed at least of ARHGEF2, NOD2 and RIPK2. Interacts with RIPK2; the interaction mediates tyrosine phosphorylation of RIPK2 by Src kinase CSK. Interacts with RIPK1 and RIPK3. Interacts with YWHAZ/14-3-3 zeta; when phosphorylated at Ser-860. Interacts with the kinases PAK4, AURKA and MAPK1. Interacts with RHOA and RAC1. Interacts with NOD1. Interacts (via the N- terminal zinc finger) with CAPN6 (via domain II). Interacts with DYNLT1. In terms of processing, phosphorylation of Ser-860 by PAK1 induces binding to protein YWHAZ, promoting its relocation to microtubules and the inhibition of its activity. Phosphorylated by AURKA and CDK1 during mitosis, which negatively regulates its activity. Phosphorylation by MAPK1 or MAPK3 increases nucleotide exchange activity. Phosphorylation by PAK4 releases GEF-H1 from the microtubules. Phosphorylated on serine, threonine and tyrosine residues in a RIPK2-dependent manner.

The protein localises to the cytoplasm. The protein resides in the cytoskeleton. Its subcellular location is the cell junction. It localises to the tight junction. It is found in the golgi apparatus. The protein localises to the spindle. The protein resides in the cytoplasmic vesicle. Functionally, activates Rho-GTPases by promoting the exchange of GDP for GTP. May be involved in epithelial barrier permeability, cell motility and polarization, dendritic spine morphology, antigen presentation, leukemic cell differentiation, cell cycle regulation, innate immune response, and cancer. Binds Rac-GTPases, but does not seem to promote nucleotide exchange activity toward Rac-GTPases. May stimulate instead the cortical activity of Rac. Inactive toward CDC42, TC10, or Ras-GTPases. Forms an intracellular sensing system along with NOD1 for the detection of microbial effectors during cell invasion by pathogens. Involved in innate immune signaling transduction pathway promoting cytokine IL6/interleukin-6 and TNF-alpha secretion in macrophage upon stimulation by bacterial peptidoglycans; acts as a signaling intermediate between NOD2 receptor and RIPK2 kinase. Contributes to the tyrosine phosphorylation of RIPK2 through Src tyrosine kinase leading to NF-kappaB activation by NOD2. Overexpression activates Rho-, but not Rac-GTPases, and increases paracellular permeability. Involved in neuronal progenitor cell division and differentiation. Involved in the migration of precerebellar neurons. The polypeptide is Rho guanine nucleotide exchange factor 2 (ARHGEF2) (Sus scrofa (Pig)).